Consider the following 194-residue polypeptide: dCTP deaminase (194 aa).

DCTP is bound by residues 110–115 (RSSLAR), Asp-128, 136–138 (VLE), Tyr-171, Lys-178, and Gln-182. The active-site Proton donor/acceptor is Glu-138. A disordered region spans residues 171–194 (YNKRKNAKYKDQQEAVASRISQDS).

Belongs to the dCTP deaminase family. As to quaternary structure, homotrimer.

The enzyme catalyses dCTP + H2O + H(+) = dUTP + NH4(+). Its pathway is pyrimidine metabolism; dUMP biosynthesis; dUMP from dCTP (dUTP route): step 1/2. Catalyzes the deamination of dCTP to dUTP. The chain is dCTP deaminase from Shewanella amazonensis (strain ATCC BAA-1098 / SB2B).